Consider the following 302-residue polypeptide: 4-hydroxy-tetrahydrodipicolinate synthase (302 aa).

Residue Thr50 participates in pyruvate binding. Catalysis depends on Tyr138, which acts as the Proton donor/acceptor. Lys167 serves as the catalytic Schiff-base intermediate with substrate. Val209 contributes to the pyruvate binding site.

This sequence belongs to the DapA family. As to quaternary structure, homotetramer; dimer of dimers.

The protein resides in the cytoplasm. It carries out the reaction L-aspartate 4-semialdehyde + pyruvate = (2S,4S)-4-hydroxy-2,3,4,5-tetrahydrodipicolinate + H2O + H(+). The protein operates within amino-acid biosynthesis; L-lysine biosynthesis via DAP pathway; (S)-tetrahydrodipicolinate from L-aspartate: step 3/4. Catalyzes the condensation of (S)-aspartate-beta-semialdehyde [(S)-ASA] and pyruvate to 4-hydroxy-tetrahydrodipicolinate (HTPA). The polypeptide is 4-hydroxy-tetrahydrodipicolinate synthase (Salinibacter ruber (strain DSM 13855 / M31)).